A 249-amino-acid chain; its full sequence is Type III pantothenate kinase (249 aa).

Residue 6–13 coordinates ATP; that stretch reads DCGNSFIK. Substrate is bound by residues tyrosine 93 and 100-103; that span reads GLDR. Aspartate 102 acts as the Proton acceptor in catalysis. Aspartate 122 is a K(+) binding site. Threonine 125 is an ATP binding site. Residue threonine 181 participates in substrate binding.

It belongs to the type III pantothenate kinase family. As to quaternary structure, homodimer. The cofactor is NH4(+). It depends on K(+) as a cofactor.

The protein localises to the cytoplasm. The catalysed reaction is (R)-pantothenate + ATP = (R)-4'-phosphopantothenate + ADP + H(+). The protein operates within cofactor biosynthesis; coenzyme A biosynthesis; CoA from (R)-pantothenate: step 1/5. In terms of biological role, catalyzes the phosphorylation of pantothenate (Pan), the first step in CoA biosynthesis. The polypeptide is Type III pantothenate kinase (Pseudomonas fluorescens (strain Pf0-1)).